Reading from the N-terminus, the 276-residue chain is Undecaprenyl-diphosphatase 1 (276 aa).

6 consecutive transmembrane segments (helical) span residues 44–63, 85–105, 109–129, 183–203, 214–234, and 249–269; these read ALAFNIIIQLGAILAVIWEY, VNLLIAFMPAVVLGVAFADLI, LFNPITVAAALVIGGIVMLWA, AATEFSFFLAMPTMVGAAVYS, GDFAVFAIGFVTSFIFAMLAV, and FAWYRIGFGLLILATWQLGMI.

The protein belongs to the UppP family.

Its subcellular location is the cell inner membrane. The enzyme catalyses di-trans,octa-cis-undecaprenyl diphosphate + H2O = di-trans,octa-cis-undecaprenyl phosphate + phosphate + H(+). Its function is as follows. Catalyzes the dephosphorylation of undecaprenyl diphosphate (UPP). Confers resistance to bacitracin. The polypeptide is Undecaprenyl-diphosphatase 1 (Stutzerimonas stutzeri (strain A1501) (Pseudomonas stutzeri)).